Consider the following 217-residue polypeptide: NADPH-dependent 3-demethoxyubiquinone 3-hydroxylase, mitochondrial (217 aa).

Residues 1-34 (MSCARALAACCLWRLRTGALQPLSAYGRRISVRF) constitute a mitochondrion transit peptide. 2 tandem repeats follow at residues 48–129 (AVDR…TALL) and 130–217 (GKEG…SERL). Residues 48-217 (AVDRIIRVDH…KVAIYLSERL (170 aa)) form a 2 X approximate tandem repeats region. Arg-51 contributes to the NADH binding site. 6 residues coordinate Fe cation: Glu-60, Glu-90, His-93, Glu-142, Glu-178, and His-181. Lys-208, Tyr-212, and Arg-216 together coordinate NADH.

It belongs to the COQ7 family. In terms of assembly, component of a multi-subunit COQ enzyme complex. Interacts with COQ8B and COQ6. Interacts with COQ9. Requires Fe cation as cofactor.

The protein localises to the mitochondrion inner membrane. It catalyses the reaction a 5-methoxy-2-methyl-3-(all-trans-polyprenyl)benzoquinone + NADH + O2 = a 3-demethylubiquinone + NAD(+) + H2O. It functions in the pathway cofactor biosynthesis; ubiquinone biosynthesis. Catalyzes the hydroxylation of the 5-methoxy-2-methyl-3-(all-trans-polyprenyl)benzoquinone at the C6 position and participates in the biosynthesis of ubiquinone. Catalyzes the reaction through a substrate-mediated reduction pathway, whereby NADH shuttles electrons to 5-methoxy-2-methyl-3-(all-trans-decaprenyl)benzoquinone, which then transfers the electrons to the two Fe(3+) centers. The binding of 5-methoxy-2-methyl-3-(all-trans-polyprenyl)benzoquinone (DMQn) mediates reduction of the diiron center by nicotinamide adenine dinucleotide (NADH) and initiates oxygen activation for subsequent DMQ hydroxylation. The physiological substrates are 5-methoxy-2-methyl-3-(all-trans-nonaprenyl)benzoquinone (DMQ(9)) and 5-methoxy-2-methyl-3-(all-trans-decaprenyl)benzoquinone (DMQ(10)), however in vitro the enzyme does not have any specificity concerning the length of the polyprenyl tail, and accepts tails of various lengths with similar efficiency. Also has a structural role in the COQ enzyme complex, stabilizing other COQ polypeptides. Involved in lifespan determination in a ubiquinone-independent manner. Plays a role in modulating mitochondrial stress responses, acting in the nucleus, perhaps via regulating gene expression, independent of its characterized mitochondrial function in ubiquinone biosynthesis. The sequence is that of NADPH-dependent 3-demethoxyubiquinone 3-hydroxylase, mitochondrial from Bos taurus (Bovine).